The chain runs to 283 residues: 2-heptyl-4(1H)-quinolone synthase subunit PqsB (283 aa).

This sequence belongs to the thiolase-like superfamily. FabH family. As to quaternary structure, forms a tight complex with PqsC.

The protein localises to the cytoplasm. With respect to regulation, activity of the complex is inhibited by 2-aminoacetophenone (2-AA). Its function is as follows. Required for the biosynthesis of the quorum-sensing signaling molecules 2-heptyl-4(1H)-quinolone (HHQ) and 2-heptyl-3-hydroxy-4(1H)-quinolone (Pseudomonas quinolone signal or PQS), which are important for biofilm formation and virulence. The PqsC/PqsB complex catalyzes the condensation of 2-aminobenzoylacetate (2-ABA) and octanoyl-CoA to form HHQ. PqsB, together with PqsC, catalyzes the coupling of 2-ABA with the octanoate group, leading to decarboxylation and dehydration, and resulting in closure of the quinoline ring. PqsB is probably required for the proper folding of PqsC rather than for a direct enzymatic role in the process. The protein is 2-heptyl-4(1H)-quinolone synthase subunit PqsB of Pseudomonas aeruginosa (strain ATCC 15692 / DSM 22644 / CIP 104116 / JCM 14847 / LMG 12228 / 1C / PRS 101 / PAO1).